Here is a 305-residue protein sequence, read N- to C-terminus: Methionyl-tRNA formyltransferase (305 aa).

111–114 lines the (6S)-5,6,7,8-tetrahydrofolate pocket; that stretch reads SLLP.

This sequence belongs to the Fmt family.

The enzyme catalyses L-methionyl-tRNA(fMet) + (6R)-10-formyltetrahydrofolate = N-formyl-L-methionyl-tRNA(fMet) + (6S)-5,6,7,8-tetrahydrofolate + H(+). In terms of biological role, attaches a formyl group to the free amino group of methionyl-tRNA(fMet). The formyl group appears to play a dual role in the initiator identity of N-formylmethionyl-tRNA by promoting its recognition by IF2 and preventing the misappropriation of this tRNA by the elongation apparatus. This is Methionyl-tRNA formyltransferase from Campylobacter jejuni subsp. jejuni serotype O:2 (strain ATCC 700819 / NCTC 11168).